The sequence spans 323 residues: Large ribosomal subunit protein uL10 (323 aa).

The segment at 296–323 (AAPAAPSAAAKEEPEESDEDDFGMGGLF) is disordered. The span at 308–317 (EPEESDEDDF) shows a compositional bias: acidic residues.

It belongs to the universal ribosomal protein uL10 family. In terms of assembly, P0 forms a pentameric complex by interaction with dimers of P1 and P2. In terms of processing, phosphorylated.

Functionally, ribosomal protein P0 is the functional equivalent of E.coli protein L10. This is Large ribosomal subunit protein uL10 (LIPO-A) from Leishmania infantum.